The primary structure comprises 375 residues: Succinyl-diaminopimelate desuccinylase (375 aa).

Position 66 (His66) interacts with Zn(2+). Asp68 is an active-site residue. Zn(2+) is bound at residue Asp99. The Proton acceptor role is filled by Glu133. Residues Glu134, Glu162, and His348 each contribute to the Zn(2+) site.

It belongs to the peptidase M20A family. DapE subfamily. In terms of assembly, homodimer. Zn(2+) serves as cofactor. Requires Co(2+) as cofactor.

The enzyme catalyses N-succinyl-(2S,6S)-2,6-diaminopimelate + H2O = (2S,6S)-2,6-diaminopimelate + succinate. Its pathway is amino-acid biosynthesis; L-lysine biosynthesis via DAP pathway; LL-2,6-diaminopimelate from (S)-tetrahydrodipicolinate (succinylase route): step 3/3. Its function is as follows. Catalyzes the hydrolysis of N-succinyl-L,L-diaminopimelic acid (SDAP), forming succinate and LL-2,6-diaminopimelate (DAP), an intermediate involved in the bacterial biosynthesis of lysine and meso-diaminopimelic acid, an essential component of bacterial cell walls. The sequence is that of Succinyl-diaminopimelate desuccinylase from Erwinia tasmaniensis (strain DSM 17950 / CFBP 7177 / CIP 109463 / NCPPB 4357 / Et1/99).